The chain runs to 563 residues: NADPH oxidase 1 (563 aa).

Topologically, residues 1-8 (MGNWLVNH) are cytoplasmic. The chain crosses the membrane as a helical span at residues 9 to 31 (WLSVLFLVSWLGLNIFLFVYVFL). Over 32–44 (NYEKSDKYYYTRE) the chain is Extracellular. A helical membrane pass occupies residues 45–69 (ILGTALALARASALCLNFNSMVILI). One can recognise a Ferric oxidoreductase domain in the interval 54–282 (RASALCLNFN…LAPIAFYIFE (229 aa)). The Cytoplasmic portion of the chain corresponds to 70–102 (PVCRNLLSFLRGTCSFCNHTLRKPLDHNLTFHK). Residues H101 and H115 each coordinate heme. A helical membrane pass occupies residues 103–123 (LVAYMICIFTAIHIIAHLFNF). At 124–167 (ERYSRSQQAMDGSLASVLSSLFHPEKEDSWLNPIQSPNVTVMYA) the chain is on the extracellular side. The N-linked (GlcNAc...) asparagine glycan is linked to N161. Residues 168-188 (AFTSIAGLTGVVATVALVLMV) form a helical membrane-spanning segment. The Cytoplasmic portion of the chain corresponds to 189 to 206 (TSAMEFIRRNYFELFWYT). Residues 207–227 (HHLFIIYIICLGIHGLGGIVR) traverse the membrane as a helical segment. Heme is bound by residues H208 and H220. The Extracellular portion of the chain corresponds to 228-395 (GQTEESMSES…TVSEDVFQYE (168 aa)). N-linked (GlcNAc...) asparagine glycosylation occurs at N241. An FAD-binding FR-type domain is found at 283–390 (RILRFYRSRQ…DGPFGTVSED (108 aa)). 337-343 (HPFTLTS) provides a ligand contact to FAD. A helical transmembrane segment spans residues 396-416 (VAVLVGAGIGVTPFASFLKSI). Positions 396-535 (VAVLVGAGIG…GVFLCGPPTL (140 aa)) are interaction with NOXO1. Over 417-563 (WYKFQRAHNK…VQFYFNKETF (147 aa)) the chain is Cytoplasmic. A Phosphothreonine; by PKC/PRKCB modification is found at T429.

As to quaternary structure, NOX1, NOXA1, NOXO1, RAC1 and CYBA forms a functional multimeric complex supporting ROS production. Interacts with NOXO1. Interacts (via FAD-binding FR-type domain) with ARHGEF7 (via PH domain). The phosphorylated form at Thr-429 interacts with NOXA1 with greater affinity. The cofactor is FAD. Phosphorylation at Thr-429 mediated by PKC/PRKBC positively regulates its interaction with NOXA1 and enzyme activity. As to expression, expressed in vascular smooth muscle cells.

It is found in the cell projection. Its subcellular location is the invadopodium membrane. It localises to the cell membrane. The catalysed reaction is NADPH + 2 O2 = 2 superoxide + NADP(+) + H(+). Its activity is regulated as follows. The oxidase activity is potentiated by NOXA1 and NOXO1. NADPH oxidase that catalyzes the generation of superoxide from molecular oxygen utilizing NADPH as an electron donor. This chain is NADPH oxidase 1 (Nox1), found in Rattus norvegicus (Rat).